Reading from the N-terminus, the 347-residue chain is Probable nitronate monooxygenase (347 aa).

FMN-binding positions include Asn-69, Gln-171, Gly-176, Gly-213, and 232–235 (QIGS).

This sequence belongs to the nitronate monooxygenase family. NMO class I subfamily. The cofactor is FMN.

It catalyses the reaction 3 propionate 3-nitronate + 3 O2 + H2O = 3 3-oxopropanoate + 2 nitrate + nitrite + H2O2 + 3 H(+). Functionally, nitronate monooxygenase that uses molecular oxygen to catalyze the oxidative denitrification of alkyl nitronates. Acts on propionate 3-nitronate (P3N), the presumed physiological substrate. Probably functions in the detoxification of P3N, a metabolic poison produced by plants and fungi as a defense mechanism. This is Probable nitronate monooxygenase (yrpB) from Bacillus subtilis (strain 168).